A 30-amino-acid chain; its full sequence is Cyclotide mden-G (30 aa).

Residues 1–30 constitute a cross-link (cyclopeptide (Gly-Asn)); it reads GIPCAESCVYIPCITAALGCSCKNKVCYRN. Intrachain disulfides connect Cys4/Cys20, Cys8/Cys22, and Cys13/Cys27.

This sequence belongs to the cyclotide family. Bracelet subfamily. Post-translationally, this is a cyclic peptide.

Probably participates in a plant defense mechanism. The chain is Cyclotide mden-G from Melicytus dentatus (Tree violet).